The sequence spans 413 residues: Peptidase T (413 aa).

Histidine 81 contacts Zn(2+). Residue aspartate 83 is part of the active site. Aspartate 143 serves as a coordination point for Zn(2+). Glutamate 178 serves as the catalytic Proton acceptor. Zn(2+) contacts are provided by glutamate 179, aspartate 201, and histidine 383.

This sequence belongs to the peptidase M20B family. As to quaternary structure, homodimer. It depends on Zn(2+) as a cofactor.

It localises to the cytoplasm. The enzyme catalyses Release of the N-terminal residue from a tripeptide.. With respect to regulation, inhibited by EDTA, by the reducing agents dithiothreitol and 13-mercaptoethanol, and by the divalent cation Cu(2+). Its function is as follows. Cleaves the N-terminal amino acid of tripeptides. Has a broad specificity for tripeptides with no clear preference for a particular tripeptide. Tripeptides with proline in the second position are an exception and are not hydrolyzed. Does not hydrolyze dipeptides, tetrapeptides, or oligopeptides. The polypeptide is Peptidase T (pepT) (Lactococcus lactis subsp. cremoris (Streptococcus cremoris)).